A 431-amino-acid chain; its full sequence is Argininosuccinate lyase (431 aa).

Belongs to the lyase 1 family. Argininosuccinate lyase subfamily.

The protein resides in the cytoplasm. It carries out the reaction 2-(N(omega)-L-arginino)succinate = fumarate + L-arginine. Its pathway is amino-acid biosynthesis; L-arginine biosynthesis; L-arginine from L-ornithine and carbamoyl phosphate: step 3/3. The protein is Argininosuccinate lyase of Xanthomonas campestris pv. campestris (strain B100).